A 960-amino-acid polypeptide reads, in one-letter code: Chromosome transmission fidelity protein 18 (960 aa).

Disordered regions lie at residues 56–79 (DLFH…STLD) and 91–113 (DISE…YPNT). Over residues 58–69 (FHSSQPVGSPTR) the composition is skewed to polar residues. 423–430 (GLAGAGKT) lines the ATP pocket.

This sequence belongs to the activator 1 small subunits family. CTF18 subfamily. In terms of assembly, component of the ctf18-RFC complex which consists of ctf18, ctf8, dcc1, rfc2, rfc3, rfc4 and rfc5.

It localises to the nucleus. Essential for the fidelity of chromosome transmission. Required for the DNA replication block checkpoint. Replication factor C (RFC) complex has an essential but redundant activity in sister chromatid cohesion establishment. Acts as a PCNA loader, loading PCNA onto primed templates. An RFC-like complex (ctf18-RFC) is formed where ctf18 replaces rfc1 in the RFC complex along with the association of dcc1 and ctf8. This complex is required for efficient establishment of chromosome cohesion during S-phase. This chain is Chromosome transmission fidelity protein 18 (ctf18), found in Schizosaccharomyces pombe (strain 972 / ATCC 24843) (Fission yeast).